The following is an 88-amino-acid chain: Sec-independent protein translocase protein TatA (88 aa).

A helical transmembrane segment spans residues 1–21 (MGGISITQLLIIASIVVVLFG). A disordered region spans residues 39–88 (FKKSMSEDDNTTSTSSDKSSQDADFTAPPIEPKANLACPDEAKNKDKEHV). Positions 49 to 62 (TTSTSSDKSSQDAD) are enriched in low complexity. Residues 78-88 (DEAKNKDKEHV) are compositionally biased toward basic and acidic residues.

This sequence belongs to the TatA/E family. In terms of assembly, the Tat system comprises two distinct complexes: a TatABC complex, containing multiple copies of TatA, TatB and TatC subunits, and a separate TatA complex, containing only TatA subunits. Substrates initially bind to the TatABC complex, which probably triggers association of the separate TatA complex to form the active translocon.

The protein resides in the cell inner membrane. Functionally, part of the twin-arginine translocation (Tat) system that transports large folded proteins containing a characteristic twin-arginine motif in their signal peptide across membranes. TatA could form the protein-conducting channel of the Tat system. This Sodalis glossinidius (strain morsitans) protein is Sec-independent protein translocase protein TatA.